We begin with the raw amino-acid sequence, 182 residues long: uncharacterized protein (182 aa).

The protein localises to the mitochondrion. This is an uncharacterized protein from Schizosaccharomyces pombe (strain 972 / ATCC 24843) (Fission yeast).